Consider the following 162-residue polypeptide: MNEQEPAPKRGRRFKEQTPVQRALGLLVRREHSRKELNRKLLARGIEPDAAQAAVDRLTGEGWQDDARFAAAVVRNRAGSGYGPLHIRAELGTHGLDSEAISAAMATFQGDWTENARDLIHRRFGEQGPIDLPQRRKAADWLARRGFDGNSIRAATRFDLED.

It belongs to the RecX family.

Its subcellular location is the cytoplasm. Modulates RecA activity. The chain is Regulatory protein RecX from Xanthomonas oryzae pv. oryzae (strain PXO99A).